Consider the following 438-residue polypeptide: Gamma-glutamyl phosphate reductase (438 aa).

It belongs to the gamma-glutamyl phosphate reductase family.

The protein localises to the cytoplasm. The catalysed reaction is L-glutamate 5-semialdehyde + phosphate + NADP(+) = L-glutamyl 5-phosphate + NADPH + H(+). The protein operates within amino-acid biosynthesis; L-proline biosynthesis; L-glutamate 5-semialdehyde from L-glutamate: step 2/2. Catalyzes the NADPH-dependent reduction of L-glutamate 5-phosphate into L-glutamate 5-semialdehyde and phosphate. The product spontaneously undergoes cyclization to form 1-pyrroline-5-carboxylate. The sequence is that of Gamma-glutamyl phosphate reductase from Prochlorococcus marinus (strain NATL2A).